The chain runs to 165 residues: Small ribosomal subunit protein uS17c (165 aa).

The N-terminal 57 residues, 1-57 (MSLSFSLLKPPLSSSNPNPFLHGTTTKLSLLPSFSALSLSSSPPSSSTTYTFPVIKA), are a transit peptide targeting the chloroplast. Residues 128–165 (AVAPEGRQSSATRPKPIQAASDELGIPLESQVEGDKTV) are disordered.

In terms of assembly, component of the chloroplast small ribosomal subunit (SSU). Mature 70S chloroplast ribosomes of higher plants consist of a small (30S) and a large (50S) subunit. The 30S small subunit contains 1 molecule of ribosomal RNA (16S rRNA) and 24 different proteins. The 50S large subunit contains 3 rRNA molecules (23S, 5S and 4.5S rRNA) and 33 different proteins.

It localises to the plastid. Its subcellular location is the chloroplast. Functionally, component of the chloroplast ribosome (chloro-ribosome), a dedicated translation machinery responsible for the synthesis of chloroplast genome-encoded proteins, including proteins of the transcription and translation machinery and components of the photosynthetic apparatus. This Spinacia oleracea (Spinach) protein is Small ribosomal subunit protein uS17c (RPS17).